Reading from the N-terminus, the 160-residue chain is Cytochrome b6-f complex subunit 4 (160 aa).

Helical transmembrane passes span 36 to 56 (LLYI…GLAV), 95 to 115 (LLGV…PFLE), and 131 to 151 (TVFL…TLPI).

This sequence belongs to the cytochrome b family. PetD subfamily. As to quaternary structure, the 4 large subunits of the cytochrome b6-f complex are cytochrome b6, subunit IV (17 kDa polypeptide, petD), cytochrome f and the Rieske protein, while the 4 small subunits are petG, petL, petM and petN. The complex functions as a dimer.

The protein resides in the plastid. It localises to the chloroplast thylakoid membrane. Its function is as follows. Component of the cytochrome b6-f complex, which mediates electron transfer between photosystem II (PSII) and photosystem I (PSI), cyclic electron flow around PSI, and state transitions. The protein is Cytochrome b6-f complex subunit 4 of Lotus japonicus (Lotus corniculatus var. japonicus).